Here is a 263-residue protein sequence, read N- to C-terminus: Hydroxyethylthiazole kinase (263 aa).

Met-45 is a binding site for substrate. Residues Arg-121 and Ser-167 each coordinate ATP. Position 194 (Gly-194) interacts with substrate.

This sequence belongs to the Thz kinase family. Requires Mg(2+) as cofactor.

The catalysed reaction is 5-(2-hydroxyethyl)-4-methylthiazole + ATP = 4-methyl-5-(2-phosphooxyethyl)-thiazole + ADP + H(+). It functions in the pathway cofactor biosynthesis; thiamine diphosphate biosynthesis; 4-methyl-5-(2-phosphoethyl)-thiazole from 5-(2-hydroxyethyl)-4-methylthiazole: step 1/1. Its function is as follows. Catalyzes the phosphorylation of the hydroxyl group of 4-methyl-5-beta-hydroxyethylthiazole (THZ). The chain is Hydroxyethylthiazole kinase from Vibrio parahaemolyticus serotype O3:K6 (strain RIMD 2210633).